We begin with the raw amino-acid sequence, 181 residues long: Translationally-controlled tumor protein homolog (181 aa).

The TCTP domain occupies 1–181 (MLIFKDAFTD…VKEALIEEKQ (181 aa)).

This sequence belongs to the TCTP family.

Its subcellular location is the cytoplasm. In terms of biological role, involved in calcium binding and microtubule stabilization. The polypeptide is Translationally-controlled tumor protein homolog (Brugia malayi (Filarial nematode worm)).